The sequence spans 474 residues: UDP-N-acetylmuramate--L-alanine ligase (474 aa).

Position 112 to 118 (112 to 118 (GTHGKTT)) interacts with ATP.

It belongs to the MurCDEF family.

The protein localises to the cytoplasm. The catalysed reaction is UDP-N-acetyl-alpha-D-muramate + L-alanine + ATP = UDP-N-acetyl-alpha-D-muramoyl-L-alanine + ADP + phosphate + H(+). It functions in the pathway cell wall biogenesis; peptidoglycan biosynthesis. Cell wall formation. The polypeptide is UDP-N-acetylmuramate--L-alanine ligase (Cupriavidus taiwanensis (strain DSM 17343 / BCRC 17206 / CCUG 44338 / CIP 107171 / LMG 19424 / R1) (Ralstonia taiwanensis (strain LMG 19424))).